Consider the following 326-residue polypeptide: Flavanone 3-dioxygenase 3 (326 aa).

Residues 1–15 (MSDTSKGIPQEQLPS) are compositionally biased toward polar residues. Residues 1 to 21 (MSDTSKGIPQEQLPSQELHPP) form a disordered region. The region spanning 175–276 (EGLQLLSVNC…RISLASIHGF (102 aa)) is the Fe2OG dioxygenase domain. Residues histidine 200, aspartate 202, and histidine 257 each contribute to the Fe cation site. Arginine 267 contacts 2-oxoglutarate.

The protein belongs to the iron/ascorbate-dependent oxidoreductase family. Requires Fe(2+) as cofactor. L-ascorbate is required as a cofactor. In terms of tissue distribution, expressed at very low levels in roots, leaves, stems and seeds.

The enzyme catalyses a (2S)-flavan-4-one + 2-oxoglutarate + O2 = a (2R,3R)-dihydroflavonol + succinate + CO2. The protein operates within secondary metabolite biosynthesis; flavonoid biosynthesis. Catalyzes the 3-beta-hydroxylation of 2S-flavanones to 2R,3R-dihydroflavonols which are intermediates in the biosynthesis of flavonols, anthocyanidins, catechins and proanthocyanidins in plants. Converts (2S)-eriodictyol to (+)-taxifolin and (2S)-naringenin to (+)-(2R/3R)-dihydrokaempferol in vitro. This Oryza sativa subsp. japonica (Rice) protein is Flavanone 3-dioxygenase 3.